The chain runs to 633 residues: MTAPHETMSFQAEVKQLLHLMIHSLYSNKEIFLRELVSNASDATDKLRFEAIANPSLLENDADLAIRIEADAKARTLKITDNGIGMSRDEAIRNLGTIARSGTKEFFQQLSGDQQKDAALIGQFGVGFYSAFIVADKVTVETRRAGLGAEEAVRWESTGDGEFTVDAIARAERGTTITLHLREGEDDFLSAWRLKSIIQKYSDHISLPIRMPKEVWDAEASTYKRTDEWESVNQASALWTRAKSDITDEQYTAFYQHIAHDNEAPLAWTHNRVEGRSEYTQLLYIPARAPFDLWDRNHKAGLKLYVKRVFIMDDAEQLLPGYLRWVKGVVDSADLPLNVSRELLQESRDVKAIREGCTKRVLSMLETLADSEDEAERAKYATFWQQFGQALKEGVGEDQANQERVAKLLRFASTHNDTAEQNVALAAYVGRMKEGQDKIYYVTADTWSAAKNSPHLEVFRKKGIEVLLLTDRVDEWMLSYLREFDGKELVSVARGDLDLGKLADEAEKAEQEKAEADWKDVIERARAVLAGKAKDVRVTLRLTESASCLVSDEGDMSGYLQRLLKQAGQKAPDAQPILELNPEHALVKKLRDLPEGEAFSDRLQVLFDQALLAEGGMLEDPAAYVQRVNKLLA.

Residues 1 to 341 (MTAPHETMSF…SADLPLNVSR (341 aa)) form an a; substrate-binding region. The b stretch occupies residues 342 to 562 (ELLQESRDVK…EGDMSGYLQR (221 aa)). The tract at residues 563–633 (LLKQAGQKAP…YVQRVNKLLA (71 aa)) is c.

Belongs to the heat shock protein 90 family. Homodimer.

The protein localises to the cytoplasm. Its function is as follows. Molecular chaperone. Has ATPase activity. In Cupriavidus taiwanensis (strain DSM 17343 / BCRC 17206 / CCUG 44338 / CIP 107171 / LMG 19424 / R1) (Ralstonia taiwanensis (strain LMG 19424)), this protein is Chaperone protein HtpG.